Consider the following 305-residue polypeptide: Lysosomal thioesterase PPT2 (305 aa).

A signal peptide spans 1 to 32 (MLGLPERRLPSAEFLLLLPFLLLLLLLLPAAP). 2 disulfide bridges follow: Cys112-Cys120 and Cys168-Cys179. The Nucleophile role is filled by Ser114. Asn193 is a glycosylation site (N-linked (GlcNAc...) asparagine). Active-site residues include Asp231 and His286. Cys279 and Cys299 are oxidised to a cystine.

It belongs to the palmitoyl-protein thioesterase family.

It localises to the lysosome. It catalyses the reaction hexadecanoyl-CoA + H2O = hexadecanoate + CoA + H(+). The enzyme catalyses S-hexadecanoyl-N-acetylcysteamine + H2O = N-acetylcysteamine + hexadecanoate + H(+). Its function is as follows. Catalyzes the cleavage of thioester bonds from S-palmitoyl-CoA or S-palmitoyl-N-acetylcysteamine (unbranched structures) but does not have activity against palmitoylcysteine or palmitoylated proteins, branched structures or bulky head groups. Conversely, hydrolyzes both long and short chain fatty acyl-CoA substrate. The protein is Lysosomal thioesterase PPT2 (PPT2) of Bos taurus (Bovine).